Reading from the N-terminus, the 303-residue chain is Pycsar effector protein BcPycTIR (303 aa).

22 to 138 provides a ligand contact to a nucleoside 3',5'-cyclic phosphate; it reads KLVGGDKGLA…RRMAKELSKR (117 aa). The interval 154–273 is TIR-like; the sequence is RVFVISSAEA…DMAGVTTIPY (120 aa).

Purified protein forms large 2-dimensional sheets when incubated with cUMP and shorter filaments in the presence of cCMP.

It is found in the cytoplasm. It carries out the reaction NAD(+) + H2O = ADP-D-ribose + nicotinamide + H(+). Its activity is regulated as follows. Activated by cyclic UMP (cUMP) and to a lesser extent by cCMP. In terms of biological role, pycsar (pyrimidine cyclase system for antiphage resistance) provides immunity against bacteriophage. The pyrimidine cyclase (PycC) synthesizes cyclic nucleotides in response to infection; these serve as specific second messenger signals. The signals activate the adjacent effector, leading to bacterial cell death and abortive phage infection. A clade B Pycsar system. Its function is as follows. The effector protein of a two-gene Pycsar system. Upon activation by cyclic UMP (cUMP) degrades cellular NAD(+). Expression of this and adjacent uridylate cyclase BcPycC (AC A0A0J5ZXG5) probably confers resistance to bacteriophage. The genes are probably only expressed in response to bacteriophage infection. This protein probably only responds to cUMP (produced by its cognate NTP cyclase). This is Pycsar effector protein BcPycTIR from Burkholderia cepacia (Pseudomonas cepacia).